Here is a 556-residue protein sequence, read N- to C-terminus: Vetispiradiene synthase 1 (556 aa).

Mg(2+) contacts are provided by Asp309, Asp313, Asp452, Thr456, and Glu460. The short motif at 309-313 (DDTFD) is the DDXXD motif element.

This sequence belongs to the terpene synthase family. Tpsa subfamily. The cofactor is Mg(2+).

It is found in the cytoplasm. It catalyses the reaction (2E,6E)-farnesyl diphosphate = (-)-vetispiradiene + diphosphate. It participates in secondary metabolite biosynthesis; terpenoid biosynthesis. Sesquiterpene synthase that catalyzes the formation of vetispiradiene from trans,trans-farnesyl diphosphate. The initial internal cyclization produces the monocyclic intermediate germacrene A. The sequence is that of Vetispiradiene synthase 1 (PVS1) from Solanum tuberosum (Potato).